The sequence spans 391 residues: Probable sugar efflux transporter (391 aa).

Helical transmembrane passes span V16–L36, V51–L71, L82–F102, M110–V130, Q138–G158, T170–P190, P210–Y230, I247–S267, F277–N297, W300–L320, I338–I358, and L361–L381.

Belongs to the major facilitator superfamily. SotB (TC 2.A.1.2) family.

The protein localises to the cell inner membrane. Functionally, involved in the efflux of sugars. The physiological role may be the reduction of the intracellular concentration of toxic sugars or sugar metabolites. The chain is Probable sugar efflux transporter from Helicobacter pylori (strain HPAG1).